Consider the following 823-residue polypeptide: ATP-dependent DNA helicase At3g02060, chloroplastic (823 aa).

The transit peptide at 1–53 (MMSLLPNPDPITVPLVLKLCSFPPPRRLFSLRLRRFTRKSSSLLPLVAVSSLS) directs the protein to the chloroplast. The region spanning 285-447 (LTERETPMDR…LTGFRDASLI (163 aa)) is the Helicase ATP-binding domain. 298 to 305 (GDVGFGKT) lines the ATP pocket. The DEEQ box signature appears at 400–403 (DEEQ). Positions 465–622 (RKEKVIEAIK…GFQLAEKDMG (158 aa)) constitute a Helicase C-terminal domain.

The protein belongs to the helicase family.

It localises to the plastid. The protein localises to the chloroplast. It catalyses the reaction ATP + H2O = ADP + phosphate + H(+). In Arabidopsis thaliana (Mouse-ear cress), this protein is ATP-dependent DNA helicase At3g02060, chloroplastic.